The sequence spans 373 residues: Geraniol dehydrogenase (373 aa).

Residues C47, H67, C96, C99, C102, C110, and C175 each coordinate Zn(2+).

Belongs to the zinc-containing alcohol dehydrogenase family. Homodimer. Requires Zn(2+) as cofactor.

The enzyme catalyses (2E)-geraniol + NAD(+) = (2E)-geranial + NADH + H(+). It carries out the reaction perillyl alcohol + NAD(+) = perillyl aldehyde + NADH + H(+). Its pathway is terpene metabolism; monoterpene degradation. Its activity is regulated as follows. Is inhibited by EDTA, N-ethylmaleimide, diethylpyrocarbonate, and 1-cyclohexyl-N-(2-morpholinoethyl)carbodiimide in vitro. Functionally, involved in the degradation of the monoterpenes beta-myrcene and limonene. During anaerobic degradation of beta-myrcene, catalyzes the NAD(+)-dependent oxidation of geraniol to geranial. Can also catalyze the oxidation of (S)-perillyl alcohol to perillyl aldehyde, and to a lesser extent, the oxidation of nerol, citronellol, cumic alcohol, and benzyl alcohol. Cannot use NADP(+) instead of NAD(+) as cosubstrate. This Castellaniella defragrans (strain DSM 12143 / CCUG 39792 / 65Phen) (Alcaligenes defragrans) protein is Geraniol dehydrogenase.